A 349-amino-acid polypeptide reads, in one-letter code: Homeobox-leucine zipper protein HOX5 (349 aa).

Residues alanine 83 to glutamine 142 constitute a DNA-binding region (homeobox). The interval lysine 141 to lysine 185 is leucine-zipper. The segment at lysine 181 to alanine 253 is disordered. Positions serine 188 to alanine 198 are enriched in low complexity.

The protein belongs to the HD-ZIP homeobox family. Class I subfamily. As to quaternary structure, homodimer. May form a heterodimer with HOX4. As to expression, expressed in seedlings, roots, leaves, nodes, internodes, flowers and embryo.

It localises to the nucleus. Probable transcription activator that binds to the DNA sequence 5'-CAAT[AT]ATTG-3'. This Oryza sativa subsp. japonica (Rice) protein is Homeobox-leucine zipper protein HOX5 (HOX5).